The chain runs to 432 residues: Polyamine export protein (432 aa).

Residues 1 to 201 enclose the CNNM transmembrane domain; sequence MIMELFHTIL…AEAGVLKTQE (201 aa). Transmembrane regions (helical) follow at residues 2-22, 61-81, 100-120, and 138-158; these read IMELFHTILAIVALILSSAVV, FITVVQILLNMVAILGGGIGE, WIAPTASTIAFILVTCLFILF, and LSVVGIMNFSMYVFKPLVWFF. CBS domains lie at 220-279 and 286-345; these read MTTR…NENV and LLRK…SNEE.

Belongs to the UPF0053 family. PaeA subfamily.

It is found in the cell inner membrane. Involved in cadaverine and putrescine tolerance in stationary phase. May facilitate the efflux of both cadaverine and putrescine from the cytoplasm, reducing potentially toxic levels under certain stress conditions. The protein is Polyamine export protein of Haemophilus influenzae (strain ATCC 51907 / DSM 11121 / KW20 / Rd).